Consider the following 139-residue polypeptide: UPF0251 protein Csac_0224 (139 aa).

The protein belongs to the UPF0251 family.

This Caldicellulosiruptor saccharolyticus (strain ATCC 43494 / DSM 8903 / Tp8T 6331) protein is UPF0251 protein Csac_0224.